Reading from the N-terminus, the 553-residue chain is ATP synthase F(1) complex subunit alpha, mitochondrial (553 aa).

The N-terminal 43 residues, 1-43 (MLSVRVAAAVARALPRRAGLVSKNALGSSFVGARNLHASNTRL), are a transit peptide targeting the mitochondrion. Phosphoserine occurs at positions 53 and 65. S76 carries the phosphoserine; alternate modification. O-linked (GlcNAc) serine; alternate glycosylation is present at S76. S106 carries the phosphoserine modification. N6-acetyllysine occurs at positions 123, 126, and 132. At T134 the chain carries Phosphothreonine. K161 bears the N6-acetyllysine; alternate mark. Residue K161 is modified to N6-succinyllysine; alternate. S166 is subject to Phosphoserine. Residue K167 is modified to N6-acetyllysine; alternate. K167 is subject to N6-succinyllysine; alternate. Residue S184 is modified to Phosphoserine. At R204 the chain carries Omega-N-methylarginine. 5 residues coordinate ATP: Q215, G217, K218, T219, and S220. Position 219 (T219) interacts with Mg(2+). An N6-acetyllysine; alternate mark is found at K230 and K239. N6-succinyllysine; alternate occurs at positions 230 and 239. K240 is subject to N6-acetyllysine. N6-acetyllysine; alternate occurs at positions 261 and 305. An N6-succinyllysine; alternate mark is found at K261 and K305. D312 contacts Mg(2+). K427 is subject to N6-acetyllysine; alternate. K427 is subject to N6-succinyllysine; alternate. Position 434 is an N6-acetyllysine (K434). Residues Q473 and Q475 each contribute to the ATP site. N6-acetyllysine; alternate occurs at positions 498 and 506. An N6-succinyllysine; alternate mark is found at K498 and K506. S521 bears the Phosphoserine mark. Residues K531 and K539 each carry the N6-acetyllysine; alternate modification. K531 and K539 each carry N6-succinyllysine; alternate. Position 541 is an N6-acetyllysine (K541).

It belongs to the ATPase alpha/beta chains family. Homotrimer. Component of the ATP synthase complex composed at least of ATP5F1A/subunit alpha, ATP5F1B/subunit beta, ATP5MC1/subunit c (homooctomer), MT-ATP6/subunit a, MT-ATP8/subunit 8, ATP5ME/subunit e, ATP5MF/subunit f, ATP5MG/subunit g, ATP5MK/subunit k, ATP5MJ/subunit j, ATP5F1C/subunit gamma, ATP5F1D/subunit delta, ATP5F1E/subunit epsilon, ATP5PF/subunit F6, ATP5PB/subunit b, ATP5PD/subunit d, ATP5PO/subunit OSCP. ATP synthase complex consists of a soluble F(1) head domain (subunits alpha(3) and beta(3)) - the catalytic core - and a membrane F(0) domain - the membrane proton channel (subunits c, a, 8, e, f, g, k and j). These two domains are linked by a central stalk (subunits gamma, delta, and epsilon) rotating inside the F1 region and a stationary peripheral stalk (subunits F6, b, d, and OSCP). Interacts with ATPAF2. Interacts with HRG; the interaction occurs on the surface of T-cells and alters the cell morphology when associated with concanavalin (in vitro). Interacts with PLG (angiostatin peptide); the interaction inhibits most of the angiogenic properties of angiostatin. Interacts with BLOC1S1. Interacts with BCL2L1 isoform BCL-X(L); the interaction mediates the association of BCL2L1 isoform BCL-X(L) with the mitochondrial membrane F(1)F(0) ATP synthase and enhances neurons metabolic efficiency. Interacts with CLN5 and PPT1. Interacts with S100A1; this interaction increases F1-ATPase activity. Interacts with ABCB7; this interaction allows the regulation of cellular iron homeostasis and cellular reactive oxygen species (ROS) levels in cardiomyocytes. In terms of processing, acetylated on lysine residues. BLOC1S1 is required for acetylation. Acetylation of Lys-132, Lys-230 and Lys-498 is observed in liver mitochondria from fasted mice but not from fed mice.

Its subcellular location is the mitochondrion inner membrane. The protein resides in the cell membrane. Its function is as follows. Subunit alpha, of the mitochondrial membrane ATP synthase complex (F(1)F(0) ATP synthase or Complex V) that produces ATP from ADP in the presence of a proton gradient across the membrane which is generated by electron transport complexes of the respiratory chain. ATP synthase complex consist of a soluble F(1) head domain - the catalytic core - and a membrane F(1) domain - the membrane proton channel. These two domains are linked by a central stalk rotating inside the F(1) region and a stationary peripheral stalk. During catalysis, ATP synthesis in the catalytic domain of F(1) is coupled via a rotary mechanism of the central stalk subunits to proton translocation. In vivo, can only synthesize ATP although its ATP hydrolase activity can be activated artificially in vitro. With the catalytic subunit beta (ATP5F1B), forms the catalytic core in the F(1) domain. Subunit alpha does not bear the catalytic high-affinity ATP-binding sites. This is ATP synthase F(1) complex subunit alpha, mitochondrial from Mus musculus (Mouse).